Consider the following 455-residue polypeptide: Dihydrolipoyllysine-residue succinyltransferase component of 2-oxoglutarate dehydrogenase complex, mitochondrial (455 aa).

Residues Met1–Lys68 constitute a mitochondrion transit peptide. One can recognise a Lipoyl-binding domain in the interval Val71–Arg145. Position 82 is a phosphoserine (Ser82). Lys111 carries the N6-lipoyllysine modification. At Lys155 the chain carries N6-acetyllysine. Over residues Lys155–Ala173 the composition is skewed to low complexity. A disordered region spans residues Lys155 to Gly220. Residues Val174–Ser193 show a composition bias toward pro residues. N6-acetyllysine occurs at positions 269, 274, 275, 279, and 309. Catalysis depends on residues His426 and Asp430.

This sequence belongs to the 2-oxoacid dehydrogenase family. As to quaternary structure, the 2-oxoglutarate dehydrogenase complex is composed of OGDH (2-oxoglutarate dehydrogenase; E1), DLST (dihydrolipoamide succinyltransferase; E2), DLD (dihydrolipoamide dehydrogenase; E3) and the assembly factor KGD4. It contains multiple copies of the three enzymatic components (E1, E2 and E3). In the nucleus, the 2-oxoglutarate dehydrogenase complex associates with KAT2A. Interacts with ABHD11; this interaction maintains the functional lipoylation of the 2-oxoglutarate dehydrogenase complex. (R)-lipoate is required as a cofactor.

The protein resides in the mitochondrion matrix. Its subcellular location is the nucleus. It carries out the reaction N(6)-[(R)-dihydrolipoyl]-L-lysyl-[protein] + succinyl-CoA = N(6)-[(R)-S(8)-succinyldihydrolipoyl]-L-lysyl-[protein] + CoA. Its pathway is amino-acid degradation; L-lysine degradation via saccharopine pathway; glutaryl-CoA from L-lysine: step 6/6. It functions in the pathway carbohydrate metabolism; tricarboxylic acid cycle. Dihydrolipoamide succinyltransferase (E2) component of the 2-oxoglutarate dehydrogenase complex. The 2-oxoglutarate dehydrogenase complex catalyzes the overall conversion of 2-oxoglutarate to succinyl-CoA and CO(2). The 2-oxoglutarate dehydrogenase complex is mainly active in the mitochondrion. A fraction of the 2-oxoglutarate dehydrogenase complex also localizes in the nucleus and is required for lysine succinylation of histones: associates with KAT2A on chromatin and provides succinyl-CoA to histone succinyltransferase KAT2A. This Bos taurus (Bovine) protein is Dihydrolipoyllysine-residue succinyltransferase component of 2-oxoglutarate dehydrogenase complex, mitochondrial.